The chain runs to 229 residues: ATP synthase subunit a (229 aa).

The next 7 helical transmembrane spans lie at 24–44 (RLCFIVYFNCLMLIFDFLLFC), 45–65 (LFDLYLFVGLCLFLLLWFMLF), 83–103 (LLFCIVFLLYIAFLFLFCFLC), 117–137 (FMDVFFIRFLLCFLECFSLLC), 143–163 (FLRLFCNLLSSHFLLLMFFDF), 177–199 (CYFILFIFVFCFCLLFYVFLYLL), and 206–228 (LQLFIFCNMILQLIMDFLLFLLF).

It belongs to the ATPase A chain family. F-type ATPases have 2 components, CF(1) - the catalytic core - and CF(0) - the membrane proton channel. CF(1) has five subunits: alpha(3), beta(3), gamma(1), delta(1), epsilon(1). CF(0) has three main subunits: a, b and c.

Its subcellular location is the mitochondrion inner membrane. Functionally, mitochondrial membrane ATP synthase (F(1)F(0) ATP synthase or Complex V) produces ATP from ADP in the presence of a proton gradient across the membrane which is generated by electron transport complexes of the respiratory chain. F-type ATPases consist of two structural domains, F(1) - containing the extramembraneous catalytic core and F(0) - containing the membrane proton channel, linked together by a central stalk and a peripheral stalk. During catalysis, ATP synthesis in the catalytic domain of F(1) is coupled via a rotary mechanism of the central stalk subunits to proton translocation. Key component of the proton channel; it may play a direct role in the translocation of protons across the membrane. The chain is ATP synthase subunit a (ATP6) from Trypanosoma brucei brucei.